We begin with the raw amino-acid sequence, 225 residues long: Single-pass membrane and coiled-coil domain-containing protein 3 (225 aa).

Residues 69–92 (IIQAMTKIQKELQKIDEALKDQLE) are a coiled coil. A helical membrane pass occupies residues 155–175 (IGTSLLGSIGVAVLSLGIDMI). Positions 182 to 209 (AVERTQLQAAIKSYEKHLEEFKAASAKY) form a coiled coil.

The protein localises to the membrane. The chain is Single-pass membrane and coiled-coil domain-containing protein 3 (Smco3) from Mus musculus (Mouse).